The primary structure comprises 71 residues: UPF0435 protein BLi00816/BL03111 (71 aa).

Belongs to the UPF0435 family.

This Bacillus licheniformis (strain ATCC 14580 / DSM 13 / JCM 2505 / CCUG 7422 / NBRC 12200 / NCIMB 9375 / NCTC 10341 / NRRL NRS-1264 / Gibson 46) protein is UPF0435 protein BLi00816/BL03111.